Consider the following 206-residue polypeptide: Cytochrome c biogenesis ATP-binding export protein CcmA (206 aa).

Residues 4–205 enclose the ABC transporter domain; it reads LEGIDLTCIR…AGAAIQRLQL (202 aa). 36–43 is a binding site for ATP; the sequence is GPNGSGKT.

It belongs to the ABC transporter superfamily. CcmA exporter (TC 3.A.1.107) family. In terms of assembly, the complex is composed of two ATP-binding proteins (CcmA) and two transmembrane proteins (CcmB).

Its subcellular location is the cell inner membrane. The enzyme catalyses heme b(in) + ATP + H2O = heme b(out) + ADP + phosphate + H(+). In terms of biological role, part of the ABC transporter complex CcmAB involved in the biogenesis of c-type cytochromes; once thought to export heme, this seems not to be the case, but its exact role is uncertain. Responsible for energy coupling to the transport system. The chain is Cytochrome c biogenesis ATP-binding export protein CcmA from Nitrosospira multiformis (strain ATCC 25196 / NCIMB 11849 / C 71).